Consider the following 88-residue polypeptide: Protein WIR1A (88 aa).

Over 1 to 13 the chain is Cytoplasmic; sequence MASLGSSAGGRRP. Residues 14-35 traverse the membrane as a helical segment; it reads TVLLQIALFVVVAAIIINSSVC. Topologically, residues 36–88 are extracellular; that stretch reads LGATAVHDAAASGTGALDPNVPAVPTPGGAGQPYTGRGCRTVYGCRPPAGGQP.

It is found in the membrane. Its function is as follows. Associated with pathogen defense. The protein is Protein WIR1A (WIR1A) of Triticum aestivum (Wheat).